The primary structure comprises 428 residues: uncharacterized protein (428 aa).

10 helical membrane-spanning segments follow: residues 26-46 (VALT…DDVF), 51-71 (AGID…VSVL), 90-110 (AAPL…SALL), 135-155 (TPFL…TLVG), 177-197 (MAPA…WLLG), 223-243 (LLIK…AHPV), 278-298 (TLLF…TGVV), 314-334 (LLTV…IDNI), 359-379 (TFWW…AVAA), and 407-427 (VVTA…YFVF).

Belongs to the CitM (TC 2.A.11) transporter family.

The protein localises to the cell membrane. This is an uncharacterized protein from Mycobacterium tuberculosis (strain CDC 1551 / Oshkosh).